Reading from the N-terminus, the 432-residue chain is Gamma-glutamyl phosphate reductase (432 aa).

This sequence belongs to the gamma-glutamyl phosphate reductase family.

It localises to the cytoplasm. The enzyme catalyses L-glutamate 5-semialdehyde + phosphate + NADP(+) = L-glutamyl 5-phosphate + NADPH + H(+). Its pathway is amino-acid biosynthesis; L-proline biosynthesis; L-glutamate 5-semialdehyde from L-glutamate: step 2/2. In terms of biological role, catalyzes the NADPH-dependent reduction of L-glutamate 5-phosphate into L-glutamate 5-semialdehyde and phosphate. The product spontaneously undergoes cyclization to form 1-pyrroline-5-carboxylate. This chain is Gamma-glutamyl phosphate reductase, found in Methylobacterium radiotolerans (strain ATCC 27329 / DSM 1819 / JCM 2831 / NBRC 15690 / NCIMB 10815 / 0-1).